The sequence spans 930 residues: Isoleucine--tRNA ligase (930 aa).

The 'HIGH' region motif lies at 57–67 (PYANGNIHVGH). Position 554 (glutamate 554) interacts with L-isoleucyl-5'-AMP. The 'KMSKS' region motif lies at 595–599 (KMSKS). Lysine 598 is an ATP binding site. Positions 888, 891, 908, and 911 each coordinate Zn(2+).

The protein belongs to the class-I aminoacyl-tRNA synthetase family. IleS type 1 subfamily. Monomer. The cofactor is Zn(2+).

It is found in the cytoplasm. It carries out the reaction tRNA(Ile) + L-isoleucine + ATP = L-isoleucyl-tRNA(Ile) + AMP + diphosphate. In terms of biological role, catalyzes the attachment of isoleucine to tRNA(Ile). As IleRS can inadvertently accommodate and process structurally similar amino acids such as valine, to avoid such errors it has two additional distinct tRNA(Ile)-dependent editing activities. One activity is designated as 'pretransfer' editing and involves the hydrolysis of activated Val-AMP. The other activity is designated 'posttransfer' editing and involves deacylation of mischarged Val-tRNA(Ile). This Streptococcus pneumoniae (strain Hungary19A-6) protein is Isoleucine--tRNA ligase.